The sequence spans 330 residues: MKTAYIAKQRQISFVKLHFSRQLEERLGLIEVQAPILSRVGDGTQDNLSGCEKAVQVKVKALPDAQFEVVHSLAKWKRQTLGQHDFSAGEGLYTHMKALRPDEDRLSPLHSVYVDQWDWERVMGDGERQFSTLKSTVEAIWAGIKATEAEVHKQFGLAPFLPEQIQFVHSQELLSRYPDLDAKGRERAIAKELGAVFLVGIGGKLSDGHRHDVRAPDYDDWSSASELGYAGLNGDILVWNPVLEDAFELSSMGIRVDADTLMRQLALTGDEDRLQLEWHQALLRGEMPQTIGGGIGQSRLTMLLLQLPHIGQVQCGVWPAQVRESIPAIL.

Belongs to the class-II aminoacyl-tRNA synthetase family. AsnA subfamily.

The protein resides in the cytoplasm. It carries out the reaction L-aspartate + NH4(+) + ATP = L-asparagine + AMP + diphosphate + H(+). The protein operates within amino-acid biosynthesis; L-asparagine biosynthesis; L-asparagine from L-aspartate (ammonia route): step 1/1. This is Aspartate--ammonia ligase from Salmonella newport (strain SL254).